Consider the following 623-residue polypeptide: E3 ubiquitin-protein ligase ORTHRUS 5 (623 aa).

The segment at 12–62 adopts a PHD-type zinc-finger fold; the sequence is DGVCMRCQVNPPSEETLTCGTCVTPWHVSCLLPESLASSTGDWECPDCSGV. The segment at 129–169 adopts an RING-type 1 zinc-finger fold; it reads CSICIQLPERPVTTPCGHNFCLKCFEKWAVGQGKLTCMICR. Positions 258 to 407 constitute a YDG domain; that stretch reads TRNQGVLVGE…HKMCRYLFVR (150 aa). The RING-type 2 zinc finger occupies 498–555; the sequence is CQICRKVLSLPVTTPCAHNFCKACLEAKFAGITQLRDRSNGVRKLRAKKNIMTCPCCT. Residues 580-623 form a disordered region; sequence KSEEEAEVAESSNISEEEGEEESEPPTKKIKMDKNSVGGTSLSA. Residues 594–603 show a composition bias toward acidic residues; sequence SEEEGEEESE. Residues 604–613 are compositionally biased toward basic and acidic residues; the sequence is PPTKKIKMDK.

In terms of tissue distribution, expressed in inflorescences.

The protein resides in the nucleus. It carries out the reaction S-ubiquitinyl-[E2 ubiquitin-conjugating enzyme]-L-cysteine + [acceptor protein]-L-lysine = [E2 ubiquitin-conjugating enzyme]-L-cysteine + N(6)-ubiquitinyl-[acceptor protein]-L-lysine.. It functions in the pathway protein modification; protein ubiquitination. Functionally, E3 ubiquitin-protein ligase. Participates in CpG methylation-dependent transcriptional regulation and epigenetic transcriptional silencing. Mediates ubiquitination with the E2 ubiquitin-conjugating enzyme UBC11. In Arabidopsis thaliana (Mouse-ear cress), this protein is E3 ubiquitin-protein ligase ORTHRUS 5 (ORTH5).